Consider the following 743-residue polypeptide: Dolichyl-phosphate-mannose--protein mannosyltransferase 5 (743 aa).

Over 1-46 (MNKEHLLKVDPIPDVTIKRGPLRSFLITKPCDNLSSLRTVTSSKEK) the chain is Lumenal. Residue asparagine 33 is glycosylated (N-linked (GlcNAc...) asparagine). A helical membrane pass occupies residues 47–67 (LLVGCLLIFTAIVRLHNISLP). At 68-129 (NSVVFGENEV…IGTEYTANVP (62 aa)) the chain is on the cytoplasmic side. Residues 130-150 (YVAMRFFSATLGIVSVLVLYL) form a helical membrane-spanning segment. Residues 151 to 158 (TLRVSGVK) lie on the Lumenal side of the membrane. Residues 159–179 (IAVAAICAVCFAIENSFVTLS) traverse the membrane as a helical segment. Position 180 (arginine 180) is a topological domain, cytoplasmic. A helical transmembrane segment spans residues 181–201 (FTLIEGPFVFFMACAVYFFRR). Residues 202-231 (SELYLPNSCKANKSLLAASIALGFAVSSKW) are Lumenal-facing. Asparagine 213 carries N-linked (GlcNAc...) asparagine glycosylation. Residues 232 to 252 (AGLFTIAWAGIIVLWRVWFMI) traverse the membrane as a helical segment. Topologically, residues 253–264 (GDLSRPIGSSIK) are cytoplasmic. Residues 265-285 (YMAFQFTCLLAIPAFIYFLIF) form a helical membrane-spanning segment. Topologically, residues 286–583 (SVHIKTLNVN…GREVYFLGNA (298 aa)) are lumenal. An MIR 1 domain is found at 320-374 (VAEVAVGSAVSLNHVGTAGGYLHSHLHNYPAGSMQQQVTLYPHIDQNNKWIIELA). Asparagine 380 and asparagine 386 each carry an N-linked (GlcNAc...) asparagine glycan. MIR domains follow at residues 384 to 444 (FQNL…IEID) and 454 to 510 (QEHI…IEEN). The chain crosses the membrane as a helical span at residues 584–604 (VLWWSVTAFICTFIIGVAVEL). Over 605-623 (LAWKLGVNILRDKHIINFH) the chain is Cytoplasmic. The helical transmembrane segment at 624 to 644 (YQVFQYLLGFAAHYFPYFFVG) threads the bilayer. Residues 645–646 (QK) are Lumenal-facing. Residues 647-667 (LFLYDYLPAYYFGILAFGHAL) traverse the membrane as a helical segment. Over 668–683 (DLISTYISNKRNNTGY) the chain is Cytoplasmic. The chain crosses the membrane as a helical span at residues 684–704 (IVVAIFMVVCFYFFSEHSPLI). Residues 705 to 743 (YATGWSSNLCKRSKWLGSWDFYCNSLLLSDSHYELNAES) are Lumenal-facing.

It belongs to the glycosyltransferase 39 family. PMT3 and PMT5 form a functional heterodimer. Also forms a minor complex with PMT2.

The protein resides in the endoplasmic reticulum membrane. It carries out the reaction a di-trans,poly-cis-dolichyl beta-D-mannosyl phosphate + L-seryl-[protein] = 3-O-(alpha-D-mannosyl)-L-seryl-[protein] + a di-trans,poly-cis-dolichyl phosphate + H(+). The catalysed reaction is a di-trans,poly-cis-dolichyl beta-D-mannosyl phosphate + L-threonyl-[protein] = 3-O-(alpha-D-mannosyl)-L-threonyl-[protein] + a di-trans,poly-cis-dolichyl phosphate + H(+). Its pathway is protein modification; protein glycosylation. Functionally, protein O-mannosyltransferase involved in O-glycosylation which is essential for cell wall rigidity. Forms a heterodimeric complex with PMT3 and more rarely with PMT2 to transfer mannose from Dol-P-mannose to Ser or Thr residues on proteins. This is Dolichyl-phosphate-mannose--protein mannosyltransferase 5 from Saccharomyces cerevisiae (strain ATCC 204508 / S288c) (Baker's yeast).